The sequence spans 701 residues: KKVLSFSHSLNTYEGTGVPEKIYNEEKNNGKFRLLGLYGNNSTNWLITDCACMISGVTTLVMHSKFSIDIIIDILNNTKLEWLCLDLDLVEGLLCRKNELPYLKKLIILDNLTKRSEMKIENEEKSNGSRKSSNKQKYNESDKREDISLCALECDKEKIEKINSLKEKAKTLGLSIIVFDNMTENKIANVTVQNEDPNFIASIVYTSGTSGKPKGVMLSNRNLYNGVIPPCDCNIIKKYPLTTHLSYLPVSHIYERVIFFIALFLGVKINIWSRDIKFLNTDICNSKAEIILGVPKVFNRMYATIMTKINNLSRCKKWIAKQAINLRKGKNNGNFSKVVEGITNISRKIKDKINPNMDVILNGGGKLSPEVAEGLSVLLNVKYYQGYGLTESTGPIFLQDVDDCNTESMGVAVSPSTRYKVRTWEIYKATDTIPKGELLIKSDSMFSGYFLEKESTEHAFTNDGYFKTGDIVQINDNGSLTFLDRSKGLVKLSQGEYIETEMINNLYSQIPFVNFCVAYGDDSMDGPLGIISVDKHKLFTFLKNDNMLKTTGVDEKNFSEKLIDETLNDPIYVDYVKGKMMEIYKKTNLNRYNVINDIYLTSKPWDTTNYLTPTLKIRRFNVFKDFSFFIDEVKKKYEEKLSGSSTGSMNNGKSGSKSDIKGGSKDDIKSGSKDDIKSGSKADIKSGSKDDIKSGSKDHIK.

13 N-linked (GlcNAc...) asparagine glycosylation sites follow: Asn40, Asn41, Asn76, Asn111, Asn127, Asn139, Asn181, Asn189, Asn311, Asn334, Asn344, Asn477, and Asn557. Residues Ile120 to Glu140 form a disordered region. The disordered stretch occupies residues Leu641–Lys701. Low complexity predominate over residues Ser642 to Gly655. 6 consecutive repeat copies span residues Lys653–Ile660, Lys661–Ile668, Lys669–Ile676, Lys677–Ile684, Lys685–Ile692, and Lys693–Ile700. Residues Lys653–Ile700 form a 6 X 8 AA approximate tandem repeats region. The segment covering Ser656–Lys701 has biased composition (basic and acidic residues).

Belongs to the ATP-dependent AMP-binding enzyme family.

It is found in the parasitophorous vacuole. This Plasmodium falciparum (isolate NF7 / Ghana) protein is Octapeptide-repeat antigen.